Consider the following 552-residue polypeptide: Arginine--tRNA ligase (552 aa).

The 'HIGH' region signature appears at 123-133 (ANPTGPLTIGR).

It belongs to the class-I aminoacyl-tRNA synthetase family. In terms of assembly, monomer.

The protein resides in the cytoplasm. The enzyme catalyses tRNA(Arg) + L-arginine + ATP = L-arginyl-tRNA(Arg) + AMP + diphosphate. This is Arginine--tRNA ligase from Chlorobium phaeovibrioides (strain DSM 265 / 1930) (Prosthecochloris vibrioformis (strain DSM 265)).